A 409-amino-acid polypeptide reads, in one-letter code: Putative competence-damage inducible protein (409 aa).

Belongs to the CinA family.

The polypeptide is Putative competence-damage inducible protein (Clostridium botulinum (strain Kyoto / Type A2)).